The chain runs to 453 residues: RuvB-like helicase 1 (453 aa).

71 to 78 lines the ATP pocket; the sequence is GGPGTGKT.

Belongs to the RuvB family. May form heterododecamers with RVB2. Component of the SWR1 chromatin remodeling complex, the INO80 chromatin remodeling complex, and of the R2TP complex.

The protein localises to the nucleus. It carries out the reaction ATP + H2O = ADP + phosphate + H(+). Its function is as follows. DNA helicase which participates in several chromatin remodeling complexes, including the SWR1 and the INO80 complexes. The SWR1 complex mediates the ATP-dependent exchange of histone H2A for the H2A variant HZT1 leading to transcriptional regulation of selected genes by chromatin remodeling. The INO80 complex remodels chromatin by shifting nucleosomes and is involved in DNA repair. Also involved in pre-rRNA processing. The protein is RuvB-like helicase 1 (RVB1) of Yarrowia lipolytica (strain CLIB 122 / E 150) (Yeast).